We begin with the raw amino-acid sequence, 318 residues long: Beta-sarcoglycan (318 aa).

Residues 1–32 (MAAAAAAAAEQQSSNGPVKKSMREKAVERRNV) are disordered. At 1–65 (MAAAAAAAAE…GLRGRKGNLA (65 aa)) the chain is on the cytoplasmic side. A compositionally biased stretch (basic and acidic residues) spans 21–32 (SMREKAVERRNV). The helical; Signal-anchor for type II membrane protein transmembrane segment at 66–86 (ICVIVLLFLLAVINLIITLVI) threads the bilayer. Topologically, residues 87 to 318 (WAVIRIGPNG…VSDNPCGNTH (232 aa)) are extracellular. N-linked (GlcNAc...) asparagine glycosylation is found at Asn-158, Asn-211, and Asn-258. Disulfide bonds link Cys-288-Cys-314 and Cys-290-Cys-307.

Belongs to the sarcoglycan beta/delta/gamma/zeta family. In terms of assembly, cross-link to form 2 major subcomplexes: one consisting of SGCB, SGCD and SGCG and the other consisting of SGCB and SGCD. The association between SGCB and SGCG is particularly strong while SGCA is loosely associated with the other sarcoglycans. Post-translationally, disulfide bonds are present.

It localises to the cell membrane. It is found in the sarcolemma. The protein localises to the cytoplasm. The protein resides in the cytoskeleton. Its function is as follows. Component of the sarcoglycan complex, a subcomplex of the dystrophin-glycoprotein complex which forms a link between the F-actin cytoskeleton and the extracellular matrix. This Oryctolagus cuniculus (Rabbit) protein is Beta-sarcoglycan (SGCB).